Here is a 375-residue protein sequence, read N- to C-terminus: Growth/differentiation factor 8 (375 aa).

A signal peptide spans 1-18 (MQKLQISVYIYLFVLILA). Positions 19–266 (GPVDLNENSE…VTDTPKRSRR (248 aa)) are excised as a propeptide. N-linked (GlcNAc...) asparagine glycosylation is present at asparagine 71. 4 cysteine pairs are disulfide-bonded: cysteine 272–cysteine 282, cysteine 281–cysteine 340, cysteine 309–cysteine 372, and cysteine 313–cysteine 374.

Belongs to the TGF-beta family. In terms of assembly, homodimer; disulfide-linked. Interacts with WFIKKN2, leading to inhibit its activity. Interacts with FSTL3. Post-translationally, synthesized as large precursor molecule that undergoes proteolytic cleavage to generate an N-terminal propeptide and a disulfide linked C-terminal dimer, which is the biologically active molecule. The circulating form consists of a latent complex of the C-terminal dimer and other proteins, including its propeptide, which maintain the C-terminal dimer in a latent, inactive state. Ligand activation requires additional cleavage of the prodomain by a tolloid-like metalloproteinase.

Its subcellular location is the secreted. Its function is as follows. Acts specifically as a negative regulator of skeletal muscle growth. This is Growth/differentiation factor 8 (MSTN) from Equus caballus (Horse).